A 472-amino-acid polypeptide reads, in one-letter code: Ribulose bisphosphate carboxylase large chain (472 aa).

Substrate-binding residues include N120 and T170. Residue K172 is the Proton acceptor of the active site. K174 provides a ligand contact to substrate. Mg(2+) contacts are provided by K198, D200, and E201. K198 carries the N6-carboxylysine modification. Residue H291 is the Proton acceptor of the active site. 3 residues coordinate substrate: R292, H324, and S376.

It belongs to the RuBisCO large chain family. Type I subfamily. Heterohexadecamer of 8 large chains and 8 small chains. The cofactor is Mg(2+).

The protein localises to the carboxysome. It carries out the reaction 2 (2R)-3-phosphoglycerate + 2 H(+) = D-ribulose 1,5-bisphosphate + CO2 + H2O. The enzyme catalyses D-ribulose 1,5-bisphosphate + O2 = 2-phosphoglycolate + (2R)-3-phosphoglycerate + 2 H(+). RuBisCO catalyzes two reactions: the carboxylation of D-ribulose 1,5-bisphosphate, the primary event in carbon dioxide fixation, as well as the oxidative fragmentation of the pentose substrate in the photorespiration process. Both reactions occur simultaneously and in competition at the same active site. The polypeptide is Ribulose bisphosphate carboxylase large chain (Gloeothece citriformis (strain PCC 7424) (Cyanothece sp. (strain PCC 7424))).